Consider the following 1097-residue polypeptide: DNA-directed RNA polymerase subunit beta (1097 aa).

A disordered region spans residues 1072-1097 (QDVNPRRSTPSRPTYESLGVADYDED).

Belongs to the RNA polymerase beta chain family. As to quaternary structure, in cyanobacteria the RNAP catalytic core is composed of 2 alpha, 1 beta, 1 beta', 1 gamma and 1 omega subunit. When a sigma factor is associated with the core the holoenzyme is formed, which can initiate transcription.

It carries out the reaction RNA(n) + a ribonucleoside 5'-triphosphate = RNA(n+1) + diphosphate. Its function is as follows. DNA-dependent RNA polymerase catalyzes the transcription of DNA into RNA using the four ribonucleoside triphosphates as substrates. The chain is DNA-directed RNA polymerase subunit beta from Synechococcus sp. (strain WH7803).